The sequence spans 175 residues: Adenine phosphoribosyltransferase (175 aa).

The protein belongs to the purine/pyrimidine phosphoribosyltransferase family. In terms of assembly, homodimer.

Its subcellular location is the cytoplasm. The enzyme catalyses AMP + diphosphate = 5-phospho-alpha-D-ribose 1-diphosphate + adenine. It participates in purine metabolism; AMP biosynthesis via salvage pathway; AMP from adenine: step 1/1. In terms of biological role, catalyzes a salvage reaction resulting in the formation of AMP, that is energically less costly than de novo synthesis. The sequence is that of Adenine phosphoribosyltransferase from Parvibaculum lavamentivorans (strain DS-1 / DSM 13023 / NCIMB 13966).